Reading from the N-terminus, the 314-residue chain is Mevalonate kinase (314 aa).

103–109 contributes to the ATP binding site; sequence GLGTSAA. Asp150 functions as the Proton acceptor in the catalytic mechanism.

The protein belongs to the GHMP kinase family. Mevalonate kinase subfamily. Homodimer. Requires Mg(2+) as cofactor.

It localises to the cytoplasm. It catalyses the reaction (R)-mevalonate + ATP = (R)-5-phosphomevalonate + ADP + H(+). Its pathway is isoprenoid biosynthesis; isopentenyl diphosphate biosynthesis via mevalonate pathway; isopentenyl diphosphate from (R)-mevalonate: step 1/3. Catalyzes the phosphorylation of (R)-mevalonate (MVA) to (R)-mevalonate 5-phosphate (MVAP). Functions in the mevalonate (MVA) pathway leading to isopentenyl diphosphate (IPP), a key precursor for the biosynthesis of isoprenoid compounds such as archaeal membrane lipids. The sequence is that of Mevalonate kinase from Saccharolobus solfataricus (strain ATCC 35092 / DSM 1617 / JCM 11322 / P2) (Sulfolobus solfataricus).